We begin with the raw amino-acid sequence, 700 residues long: Peroxisomal acyl-coenzyme A oxidase 3 (700 aa).

The residue at position 2 (Ala-2) is an N-acetylalanine. The residue at position 281 (Thr-281) is a Phosphothreonine. Residues 698–700 carry the Microbody targeting signal motif; that stretch reads SKL.

This sequence belongs to the acyl-CoA oxidase family. Requires FAD as cofactor.

The protein resides in the peroxisome. The enzyme catalyses a 2,3-saturated acyl-CoA + O2 = a (2E)-enoyl-CoA + H2O2. The catalysed reaction is (2S)-pristanoyl-CoA + O2 = (2E)-pristenoyl-CoA + H2O2. It carries out the reaction tetracosanoyl-CoA + O2 = (2E)-tetracosenoyl-CoA + H2O2. It catalyses the reaction hexadecanoyl-CoA + O2 = (2E)-hexadecenoyl-CoA + H2O2. The enzyme catalyses hexadecanedioyl-CoA + O2 = (2E)-hexadecenedioyl-CoA + H2O2. It participates in lipid metabolism; peroxisomal fatty acid beta-oxidation. Its function is as follows. Oxidizes the CoA-esters of 2-methyl-branched fatty acids. The chain is Peroxisomal acyl-coenzyme A oxidase 3 (ACOX3) from Homo sapiens (Human).